A 293-amino-acid polypeptide reads, in one-letter code: MAGQPLRRPAWVPLLLRLLLAGIAACDASPADDSAGPGGRGPRGRARGDAGADEAVPRHDSSYGTFASEFYDLRYLSEEGYPFPTAPPVDPFAKIKVEDCGRTKGCFRYGKPGCNAETCDYFLSYRMIGADVEFELSADTDGWVAVGFSSDKKMGGDDVMACVHDDNGRVRIQHFYNVGQWAKEVQRNPARDEEGVFENNRVTCRFKRPVNVPRDETIVDLHLSWYYLFAWGPAIQGAITRHDIDSPPASERVVSIYKYEDIFMPSAAYQTFSSPFCLLLIVALTFYLLMGTP.

The signal sequence occupies residues 1–28 (MAGQPLRRPAWVPLLLRLLLAGIAACDA). Residues 29–60 (SPADDSAGPGGRGPRGRARGDAGADEAVPRHD) form a disordered region. The segment covering 46–60 (ARGDAGADEAVPRHD) has biased composition (basic and acidic residues). A DOMON domain is found at 119–234 (CDYFLSYRMI…WYYLFAWGPA (116 aa)). Residues 271 to 291 (TFSSPFCLLLIVALTFYLLMG) form a helical membrane-spanning segment.

In terms of assembly, component of the outer core of AMPAR complex. AMPAR complex consists of an inner core made of 4 pore-forming GluA/GRIA proteins (GRIA1, GRIA2, GRIA3 and GRIA4) and 4 major auxiliary subunits arranged in a twofold symmetry. One of the two pairs of distinct binding sites is occupied either by CNIH2, CNIH3 or CACNG2, CACNG3. The other harbors CACNG2, CACNG3, CACNG4, CACNG8 or GSG1L. This inner core of AMPAR complex is complemented by outer core constituents binding directly to the GluA/GRIA proteins at sites distinct from the interaction sites of the inner core constituents. Outer core constituents include at least PRRT1, PRRT2, CKAMP44/SHISA9, FRRS1L and NRN1. The proteins of the inner and outer core serve as a platform for other, more peripherally associated AMPAR constituents. Alone or in combination, these auxiliary subunits control the gating and pharmacology of the AMPAR complex and profoundly impact their biogenesis and protein processing. As to expression, expressed in the brain (at protein level). In embryos expression is evident in the ventral forebrain, but a lower level is seen in the remainder of the embryos. In the adult brain, expressed in the cortex, cerebellum, hippocampus and basal ganglia.

It localises to the cell membrane. Its subcellular location is the synapse. Its function is as follows. Important modulator of glutamate signaling pathway. The chain is DOMON domain-containing protein FRRS1L (Frrs1l) from Mus musculus (Mouse).